A 696-amino-acid polypeptide reads, in one-letter code: Methionine--tRNA ligase (696 aa).

The 'HIGH' region signature appears at 12-22; it reads PYANGAIHLGH. Zn(2+) is bound by residues C143, C146, C156, and C159. The short motif at 336–340 is the 'KMSKS' region element; it reads KMSKS. Residue K339 coordinates ATP. Residues 556–580 are disordered; the sequence is SLAPAPEAQSQQRHAEHQQNEVTAE. Residues 591–696 enclose the tRNA-binding domain; sequence DFMKVDLRIV…SGAQPGMRVK (106 aa).

This sequence belongs to the class-I aminoacyl-tRNA synthetase family. MetG type 1 subfamily. As to quaternary structure, homodimer. Requires Zn(2+) as cofactor.

The protein resides in the cytoplasm. The enzyme catalyses tRNA(Met) + L-methionine + ATP = L-methionyl-tRNA(Met) + AMP + diphosphate. Its function is as follows. Is required not only for elongation of protein synthesis but also for the initiation of all mRNA translation through initiator tRNA(fMet) aminoacylation. The sequence is that of Methionine--tRNA ligase from Dechloromonas aromatica (strain RCB).